The chain runs to 327 residues: Elongation factor P--(R)-beta-lysine ligase (327 aa).

Serine 80–glutamate 82 contacts substrate. ATP-binding positions include arginine 104–glutamate 106 and asparagine 113. Tyrosine 122 is a binding site for substrate. An ATP-binding site is contributed by glutamate 246 to leucine 247. Glutamate 253 contributes to the substrate binding site. Glycine 302 is a binding site for ATP.

Belongs to the class-II aminoacyl-tRNA synthetase family. EpmA subfamily. Homodimer.

The catalysed reaction is D-beta-lysine + L-lysyl-[protein] + ATP = N(6)-((3R)-3,6-diaminohexanoyl)-L-lysyl-[protein] + AMP + diphosphate + H(+). Functionally, with EpmB is involved in the beta-lysylation step of the post-translational modification of translation elongation factor P (EF-P). Catalyzes the ATP-dependent activation of (R)-beta-lysine produced by EpmB, forming a lysyl-adenylate, from which the beta-lysyl moiety is then transferred to the epsilon-amino group of a conserved specific lysine residue in EF-P. The sequence is that of Elongation factor P--(R)-beta-lysine ligase from Haemophilus ducreyi (strain 35000HP / ATCC 700724).